Reading from the N-terminus, the 94-residue chain is Small ribosomal subunit protein uS19c (94 aa).

This sequence belongs to the universal ribosomal protein uS19 family.

The protein localises to the plastid. It is found in the chloroplast. In terms of biological role, protein S19 forms a complex with S13 that binds strongly to the 16S ribosomal RNA. The sequence is that of Small ribosomal subunit protein uS19c (rps19) from Euglena gracilis.